Consider the following 214-residue polypeptide: 3,4-dihydroxy-2-butanone 4-phosphate synthase (214 aa).

D-ribulose 5-phosphate-binding positions include 37 to 38 (RE), Asp-42, 150 to 154 (RPGHT), and Glu-174. A Mg(2+)-binding site is contributed by Glu-38. His-153 contacts Mg(2+).

The protein belongs to the DHBP synthase family. In terms of assembly, homodimer. Mg(2+) serves as cofactor. Mn(2+) is required as a cofactor.

The catalysed reaction is D-ribulose 5-phosphate = (2S)-2-hydroxy-3-oxobutyl phosphate + formate + H(+). It functions in the pathway cofactor biosynthesis; riboflavin biosynthesis; 2-hydroxy-3-oxobutyl phosphate from D-ribulose 5-phosphate: step 1/1. Its function is as follows. Catalyzes the conversion of D-ribulose 5-phosphate to formate and 3,4-dihydroxy-2-butanone 4-phosphate. The polypeptide is 3,4-dihydroxy-2-butanone 4-phosphate synthase (Mannheimia succiniciproducens (strain KCTC 0769BP / MBEL55E)).